Here is a 242-residue protein sequence, read N- to C-terminus: Uroporphyrinogen-III C-methyltransferase (242 aa).

S-adenosyl-L-homocysteine is bound by residues P12, 88–90, 118–119, and M170; these read GGD and TS.

Belongs to the precorrin methyltransferase family. In terms of assembly, homodimer.

It catalyses the reaction uroporphyrinogen III + 2 S-adenosyl-L-methionine = precorrin-2 + 2 S-adenosyl-L-homocysteine + H(+). The protein operates within cofactor biosynthesis; adenosylcobalamin biosynthesis; precorrin-2 from uroporphyrinogen III: step 1/1. Catalyzes the two successive C-2 and C-7 methylation reactions involved in the conversion of uroporphyrinogen III to precorrin-2 via the intermediate formation of precorrin-1. It is a step in the biosynthesis of both cobalamin (vitamin B12) and coenzyme F430. This is Uroporphyrinogen-III C-methyltransferase (cobA) from Methanocaldococcus jannaschii (strain ATCC 43067 / DSM 2661 / JAL-1 / JCM 10045 / NBRC 100440) (Methanococcus jannaschii).